The following is a 177-amino-acid chain: ATP synthase subunit delta (177 aa).

It belongs to the ATPase delta chain family. As to quaternary structure, F-type ATPases have 2 components, F(1) - the catalytic core - and F(0) - the membrane proton channel. F(1) has five subunits: alpha(3), beta(3), gamma(1), delta(1), epsilon(1). F(0) has three main subunits: a(1), b(2) and c(10-14). The alpha and beta chains form an alternating ring which encloses part of the gamma chain. F(1) is attached to F(0) by a central stalk formed by the gamma and epsilon chains, while a peripheral stalk is formed by the delta and b chains.

The protein resides in the cell inner membrane. Functionally, f(1)F(0) ATP synthase produces ATP from ADP in the presence of a proton or sodium gradient. F-type ATPases consist of two structural domains, F(1) containing the extramembraneous catalytic core and F(0) containing the membrane proton channel, linked together by a central stalk and a peripheral stalk. During catalysis, ATP synthesis in the catalytic domain of F(1) is coupled via a rotary mechanism of the central stalk subunits to proton translocation. This protein is part of the stalk that links CF(0) to CF(1). It either transmits conformational changes from CF(0) to CF(1) or is implicated in proton conduction. This Herminiimonas arsenicoxydans protein is ATP synthase subunit delta.